A 544-amino-acid polypeptide reads, in one-letter code: CTP synthase (544 aa).

The interval 1–267 (MAKFVFITGG…AQRVLQILNL (267 aa)) is amidoligase domain. Residue Ser-13 coordinates CTP. Residue Ser-13 coordinates UTP. 14–19 (SIGKGI) lines the ATP pocket. L-glutamine is bound at residue Tyr-54. Asp-71 is an ATP binding site. The Mg(2+) site is built by Asp-71 and Glu-141. CTP is bound by residues 148-150 (DIE), 188-193 (KTKPTQ), and Lys-224. UTP is bound by residues 188-193 (KTKPTQ) and Lys-224. The Glutamine amidotransferase type-1 domain maps to 292–534 (EIAIVGKYVR…IEAALRSRSR (243 aa)). Gly-354 contributes to the L-glutamine binding site. Cys-381 acts as the Nucleophile; for glutamine hydrolysis in catalysis. L-glutamine is bound by residues 382-385 (LGMQ), Glu-405, and Arg-462. Catalysis depends on residues His-507 and Glu-509.

The protein belongs to the CTP synthase family. In terms of assembly, homotetramer.

It carries out the reaction UTP + L-glutamine + ATP + H2O = CTP + L-glutamate + ADP + phosphate + 2 H(+). It catalyses the reaction L-glutamine + H2O = L-glutamate + NH4(+). The enzyme catalyses UTP + NH4(+) + ATP = CTP + ADP + phosphate + 2 H(+). It participates in pyrimidine metabolism; CTP biosynthesis via de novo pathway; CTP from UDP: step 2/2. With respect to regulation, allosterically activated by GTP, when glutamine is the substrate; GTP has no effect on the reaction when ammonia is the substrate. The allosteric effector GTP functions by stabilizing the protein conformation that binds the tetrahedral intermediate(s) formed during glutamine hydrolysis. Inhibited by the product CTP, via allosteric rather than competitive inhibition. Functionally, catalyzes the ATP-dependent amination of UTP to CTP with either L-glutamine or ammonia as the source of nitrogen. Regulates intracellular CTP levels through interactions with the four ribonucleotide triphosphates. The chain is CTP synthase from Synechococcus sp. (strain JA-3-3Ab) (Cyanobacteria bacterium Yellowstone A-Prime).